Here is a 257-residue protein sequence, read N- to C-terminus: 3-methyl-2-oxobutanoate hydroxymethyltransferase (257 aa).

Mg(2+) contacts are provided by Asp-44 and Asp-83. 3-methyl-2-oxobutanoate contacts are provided by residues 44 to 45 (DS), Asp-83, and Lys-113. Mg(2+) is bound at residue Glu-115. Glu-182 functions as the Proton acceptor in the catalytic mechanism.

This sequence belongs to the PanB family. In terms of assembly, homodecamer; pentamer of dimers. Mg(2+) serves as cofactor.

It localises to the cytoplasm. The enzyme catalyses 3-methyl-2-oxobutanoate + (6R)-5,10-methylene-5,6,7,8-tetrahydrofolate + H2O = 2-dehydropantoate + (6S)-5,6,7,8-tetrahydrofolate. The protein operates within cofactor biosynthesis; (R)-pantothenate biosynthesis; (R)-pantoate from 3-methyl-2-oxobutanoate: step 1/2. In terms of biological role, catalyzes the reversible reaction in which hydroxymethyl group from 5,10-methylenetetrahydrofolate is transferred onto alpha-ketoisovalerate to form ketopantoate. This chain is 3-methyl-2-oxobutanoate hydroxymethyltransferase, found in Rippkaea orientalis (strain PCC 8801 / RF-1) (Cyanothece sp. (strain PCC 8801)).